The following is a 1076-amino-acid chain: Bifunctional glutamine synthetase adenylyltransferase/adenylyl-removing enzyme (1076 aa).

Residues methionine 1 to methionine 521 form an adenylyl removase region. Residues valine 524–arginine 1076 are adenylyl transferase. A compositionally biased stretch (low complexity) spans threonine 1042 to proline 1056. Residues threonine 1042–arginine 1076 are disordered.

The protein belongs to the GlnE family. Requires Mg(2+) as cofactor.

The enzyme catalyses [glutamine synthetase]-O(4)-(5'-adenylyl)-L-tyrosine + phosphate = [glutamine synthetase]-L-tyrosine + ADP. The catalysed reaction is [glutamine synthetase]-L-tyrosine + ATP = [glutamine synthetase]-O(4)-(5'-adenylyl)-L-tyrosine + diphosphate. Involved in the regulation of glutamine synthetase GlnA, a key enzyme in the process to assimilate ammonia. When cellular nitrogen levels are high, the C-terminal adenylyl transferase (AT) inactivates GlnA by covalent transfer of an adenylyl group from ATP to specific tyrosine residue of GlnA, thus reducing its activity. Conversely, when nitrogen levels are low, the N-terminal adenylyl removase (AR) activates GlnA by removing the adenylyl group by phosphorolysis, increasing its activity. The regulatory region of GlnE binds the signal transduction protein PII (GlnB) which indicates the nitrogen status of the cell. In Bifidobacterium longum (strain DJO10A), this protein is Bifunctional glutamine synthetase adenylyltransferase/adenylyl-removing enzyme.